A 20-amino-acid polypeptide reads, in one-letter code: Dahlein-5.3 (20 aa).

As to expression, expressed by the skin dorsal glands.

The protein resides in the secreted. Has no antimicrobial activity. Strongly inhibits the formation of NO by neuronal nitric oxide synthase at micromolar concentrations. The polypeptide is Dahlein-5.3 (Ranoidea dahlii (Dahl's aquatic frog)).